The chain runs to 500 residues: Aspartyl/glutamyl-tRNA(Asn/Gln) amidotransferase subunit B (500 aa).

Belongs to the GatB/GatE family. GatB subfamily. In terms of assembly, heterotrimer of A, B and C subunits.

It carries out the reaction L-glutamyl-tRNA(Gln) + L-glutamine + ATP + H2O = L-glutaminyl-tRNA(Gln) + L-glutamate + ADP + phosphate + H(+). The enzyme catalyses L-aspartyl-tRNA(Asn) + L-glutamine + ATP + H2O = L-asparaginyl-tRNA(Asn) + L-glutamate + ADP + phosphate + 2 H(+). Its function is as follows. Allows the formation of correctly charged Asn-tRNA(Asn) or Gln-tRNA(Gln) through the transamidation of misacylated Asp-tRNA(Asn) or Glu-tRNA(Gln) in organisms which lack either or both of asparaginyl-tRNA or glutaminyl-tRNA synthetases. The reaction takes place in the presence of glutamine and ATP through an activated phospho-Asp-tRNA(Asn) or phospho-Glu-tRNA(Gln). The sequence is that of Aspartyl/glutamyl-tRNA(Asn/Gln) amidotransferase subunit B from Brucella anthropi (strain ATCC 49188 / DSM 6882 / CCUG 24695 / JCM 21032 / LMG 3331 / NBRC 15819 / NCTC 12168 / Alc 37) (Ochrobactrum anthropi).